We begin with the raw amino-acid sequence, 413 residues long: L-cysteine:1D-myo-inositol 2-amino-2-deoxy-alpha-D-glucopyranoside ligase (413 aa).

C15 is a binding site for Zn(2+). Residues 15–18 (CGIT), T30, and 53–55 (NVT) each bind L-cysteinyl-5'-AMP. Positions 17–27 (ITPYDATHLGH) match the 'HIGH' region motif. Residues 155 to 160 (ERGGDP) carry the 'ERGGDP' region motif. L-cysteinyl-5'-AMP is bound at residue W195. C199 contacts Zn(2+). 217–219 (GTD) serves as a coordination point for L-cysteinyl-5'-AMP. H224 is a Zn(2+) binding site. Position 251 (V251) interacts with L-cysteinyl-5'-AMP. The 'KMSKS' region signature appears at 257–261 (KMSKS).

This sequence belongs to the class-I aminoacyl-tRNA synthetase family. MshC subfamily. Monomer. Requires Zn(2+) as cofactor.

It carries out the reaction 1D-myo-inositol 2-amino-2-deoxy-alpha-D-glucopyranoside + L-cysteine + ATP = 1D-myo-inositol 2-(L-cysteinylamino)-2-deoxy-alpha-D-glucopyranoside + AMP + diphosphate + H(+). Catalyzes the ATP-dependent condensation of GlcN-Ins and L-cysteine to form L-Cys-GlcN-Ins. This Frankia alni (strain DSM 45986 / CECT 9034 / ACN14a) protein is L-cysteine:1D-myo-inositol 2-amino-2-deoxy-alpha-D-glucopyranoside ligase.